A 1167-amino-acid chain; its full sequence is Melanoma receptor tyrosine-protein kinase (1167 aa).

Positions 1–25 are cleaved as a signal peptide; that stretch reads MEFLRGGAALLQLLLVLSISRCCST. The Extracellular portion of the chain corresponds to 26–642; that stretch reads DPDRKVCQGT…GCRGDIVSHS (617 aa). Residues Asn-114, Asn-144, and Asn-201 are each glycosylated (N-linked (GlcNAc...) asparagine). Intrachain disulfides connect Cys-195–Cys-204, Cys-199–Cys-212, Cys-220–Cys-228, Cys-224–Cys-236, Cys-237–Cys-245, Cys-241–Cys-253, Cys-256–Cys-265, Cys-269–Cys-296, Cys-300–Cys-311, Cys-315–Cys-330, and Cys-333–Cys-337. N-linked (GlcNAc...) asparagine glycosylation is found at Asn-356, Asn-365, Asn-398, Asn-417, and Asn-501. Intrachain disulfides connect Cys-504-Cys-513, Cys-508-Cys-521, Cys-524-Cys-533, Cys-537-Cys-553, Cys-556-Cys-569, Cys-560-Cys-577, Cys-593-Cys-615, Cys-618-Cys-626, and Cys-622-Cys-634. Residue Asn-576 is glycosylated (N-linked (GlcNAc...) asparagine). Asn-621 carries N-linked (GlcNAc...) asparagine glycosylation. A helical transmembrane segment spans residues 643–665; the sequence is SLAVGLVSGLLITVIVALLIVVL. Residues 666 to 1167 are Cytoplasmic-facing; it reads LRRRRIKRKR…QGGALYTPVR (502 aa). Positions 710–977 constitute a Protein kinase domain; it reads FKKDRVLGSG…QMARDPSRYL (268 aa). Residues 716 to 724 and Lys-743 contribute to the ATP site; that span reads LGSGAFGTV. The Proton acceptor role is filled by Asp-835.

This sequence belongs to the protein kinase superfamily. Tyr protein kinase family. EGF receptor subfamily.

It is found in the membrane. It carries out the reaction L-tyrosyl-[protein] + ATP = O-phospho-L-tyrosyl-[protein] + ADP + H(+). Probable receptor with tyrosine-protein kinase activity. The chain is Melanoma receptor tyrosine-protein kinase (xmrk) from Xiphophorus maculatus (Southern platyfish).